The following is a 417-amino-acid chain: Origin of replication complex subunit 4 (417 aa).

An ATP-binding site is contributed by 59 to 66 (GPRGSGKA).

It belongs to the ORC4 family. As to quaternary structure, component of the origin recognition complex (ORC) composed of at least ORC1 (ORC1A or ORC1B), ORC2, ORC3, ORC4, ORC5 and ORC6. ORC is regulated in a cell-cycle and development dependent manner. It is sequentially assembled at the exit from anaphase of mitosis and disassembled as cells enter S phase. Interacts directly with ORC1A, ORC2, ORC3, ORC5 and ORC6. In terms of tissue distribution, follow a cell-cycle regulation with a peak at the G1/S-phase. Isoform AtORC4a is expressed at low levels ubiquitously. Isoform AtORC4b is mostly expressed in siliques, flowers and flower buds, and, to a lower exent, in roots, leaves and stems.

The protein localises to the nucleus. Functionally, component of the origin recognition complex (ORC) that binds origins of replication. DNA-binding is ATP-dependent. The specific DNA sequences that define origins of replication have not been identified yet. ORC is required to assemble the pre-replication complex necessary to initiate DNA replication. This chain is Origin of replication complex subunit 4, found in Arabidopsis thaliana (Mouse-ear cress).